Here is a 202-residue protein sequence, read N- to C-terminus: Pyridoxal 5'-phosphate synthase subunit PdxT (202 aa).

Residue 48–50 (GES) coordinates L-glutamine. Cysteine 80 (nucleophile) is an active-site residue. L-glutamine contacts are provided by residues arginine 112 and 139 to 140 (IR). Active-site charge relay system residues include histidine 180 and glutamate 182.

This sequence belongs to the glutaminase PdxT/SNO family. In terms of assembly, in the presence of PdxS, forms a dodecamer of heterodimers. Only shows activity in the heterodimer.

The enzyme catalyses aldehydo-D-ribose 5-phosphate + D-glyceraldehyde 3-phosphate + L-glutamine = pyridoxal 5'-phosphate + L-glutamate + phosphate + 3 H2O + H(+). It catalyses the reaction L-glutamine + H2O = L-glutamate + NH4(+). The protein operates within cofactor biosynthesis; pyridoxal 5'-phosphate biosynthesis. Its function is as follows. Catalyzes the hydrolysis of glutamine to glutamate and ammonia as part of the biosynthesis of pyridoxal 5'-phosphate. The resulting ammonia molecule is channeled to the active site of PdxS. The polypeptide is Pyridoxal 5'-phosphate synthase subunit PdxT (Hyperthermus butylicus (strain DSM 5456 / JCM 9403 / PLM1-5)).